The sequence spans 500 residues: Probable malate:quinone oxidoreductase (500 aa).

Belongs to the MQO family. FAD serves as cofactor.

It carries out the reaction (S)-malate + a quinone = a quinol + oxaloacetate. Its pathway is carbohydrate metabolism; tricarboxylic acid cycle; oxaloacetate from (S)-malate (quinone route): step 1/1. This is Probable malate:quinone oxidoreductase from Bacillus cereus (strain G9842).